Reading from the N-terminus, the 258-residue chain is Thiazole synthase (258 aa).

The active-site Schiff-base intermediate with DXP is Lys-100. Residues Gly-161, 187-188 (AG), and 209-210 (NS) each bind 1-deoxy-D-xylulose 5-phosphate.

The protein belongs to the ThiG family. Homotetramer. Forms heterodimers with either ThiH or ThiS.

The protein localises to the plastid. It localises to the chloroplast. It carries out the reaction [ThiS sulfur-carrier protein]-C-terminal-Gly-aminoethanethioate + 2-iminoacetate + 1-deoxy-D-xylulose 5-phosphate = [ThiS sulfur-carrier protein]-C-terminal Gly-Gly + 2-[(2R,5Z)-2-carboxy-4-methylthiazol-5(2H)-ylidene]ethyl phosphate + 2 H2O + H(+). Its pathway is cofactor biosynthesis; thiamine diphosphate biosynthesis. Catalyzes the rearrangement of 1-deoxy-D-xylulose 5-phosphate (DXP) to produce the thiazole phosphate moiety of thiamine. Sulfur is provided by the thiocarboxylate moiety of the carrier protein ThiS. In vitro, sulfur can be provided by H(2)S. The chain is Thiazole synthase from Cyanidioschyzon merolae (strain NIES-3377 / 10D) (Unicellular red alga).